A 334-amino-acid chain; its full sequence is MRIAVDAMGGDHAPAEIVKGALRSIEQFDIEVILVGQPERIKEFLPQGEVPARVRIKEATEVVEMDEHPAQAVRRKKDSSIVVATRLVKEGEADALVSAGSTGAQMAASLLGLGRIKGIDRPAIVTVLPTLEGGKLLLDVGANPDAKPEHLLQYAMMGSIYAESILGIQNPKVGLLNIGTEETKGNELTQATYPLLQKAPLNFIGNVEGRAIPYGQAADVVVCEGFVGNVVLKTTEGLAGALFQLIKEKITATPLRKLGALAIKPGLKEIAKMMDYAEYGGAPLLGVNGISIISHGSSNEKAIFNAIRVAKECVESGFIEEIKKELPRFTAAQE.

Belongs to the PlsX family. Homodimer. Probably interacts with PlsY.

It is found in the cytoplasm. It carries out the reaction a fatty acyl-[ACP] + phosphate = an acyl phosphate + holo-[ACP]. It participates in lipid metabolism; phospholipid metabolism. Functionally, catalyzes the reversible formation of acyl-phosphate (acyl-PO(4)) from acyl-[acyl-carrier-protein] (acyl-ACP). This enzyme utilizes acyl-ACP as fatty acyl donor, but not acyl-CoA. In Desulfitobacterium hafniense (strain DSM 10664 / DCB-2), this protein is Phosphate acyltransferase.